We begin with the raw amino-acid sequence, 289 residues long: ATP phosphoribosyltransferase (289 aa).

The protein belongs to the ATP phosphoribosyltransferase family. Long subfamily. The cofactor is Mg(2+).

The protein localises to the cytoplasm. The enzyme catalyses 1-(5-phospho-beta-D-ribosyl)-ATP + diphosphate = 5-phospho-alpha-D-ribose 1-diphosphate + ATP. The protein operates within amino-acid biosynthesis; L-histidine biosynthesis; L-histidine from 5-phospho-alpha-D-ribose 1-diphosphate: step 1/9. With respect to regulation, feedback inhibited by histidine. Catalyzes the condensation of ATP and 5-phosphoribose 1-diphosphate to form N'-(5'-phosphoribosyl)-ATP (PR-ATP). Has a crucial role in the pathway because the rate of histidine biosynthesis seems to be controlled primarily by regulation of HisG enzymatic activity. The protein is ATP phosphoribosyltransferase of Solibacter usitatus (strain Ellin6076).